The sequence spans 234 residues: Small ribosomal subunit protein uS3 (234 aa).

Residues 39-107 (VRKFLNKELA…PAQINIAEVK (69 aa)) enclose the KH type-2 domain.

This sequence belongs to the universal ribosomal protein uS3 family. As to quaternary structure, part of the 30S ribosomal subunit. Forms a tight complex with proteins S10 and S14.

Functionally, binds the lower part of the 30S subunit head. Binds mRNA in the 70S ribosome, positioning it for translation. This chain is Small ribosomal subunit protein uS3, found in Haemophilus ducreyi (strain 35000HP / ATCC 700724).